We begin with the raw amino-acid sequence, 446 residues long: Argininosuccinate lyase (446 aa).

This sequence belongs to the lyase 1 family. Argininosuccinate lyase subfamily.

The protein localises to the cytoplasm. The enzyme catalyses 2-(N(omega)-L-arginino)succinate = fumarate + L-arginine. It functions in the pathway amino-acid biosynthesis; L-arginine biosynthesis; L-arginine from L-ornithine and carbamoyl phosphate: step 3/3. The protein is Argininosuccinate lyase of Bacteroides thetaiotaomicron (strain ATCC 29148 / DSM 2079 / JCM 5827 / CCUG 10774 / NCTC 10582 / VPI-5482 / E50).